Reading from the N-terminus, the 448-residue chain is Probable glycine dehydrogenase (decarboxylating) subunit 1 (448 aa).

The protein belongs to the GcvP family. N-terminal subunit subfamily. As to quaternary structure, the glycine cleavage system is composed of four proteins: P, T, L and H. In this organism, the P 'protein' is a heterodimer of two subunits.

The enzyme catalyses N(6)-[(R)-lipoyl]-L-lysyl-[glycine-cleavage complex H protein] + glycine + H(+) = N(6)-[(R)-S(8)-aminomethyldihydrolipoyl]-L-lysyl-[glycine-cleavage complex H protein] + CO2. Its function is as follows. The glycine cleavage system catalyzes the degradation of glycine. The P protein binds the alpha-amino group of glycine through its pyridoxal phosphate cofactor; CO(2) is released and the remaining methylamine moiety is then transferred to the lipoamide cofactor of the H protein. In Shouchella clausii (strain KSM-K16) (Alkalihalobacillus clausii), this protein is Probable glycine dehydrogenase (decarboxylating) subunit 1.